A 429-amino-acid chain; its full sequence is 4-hydroxyphenylacetate degradation bifunctional isomerase/decarboxylase (429 aa).

2 Approximate repeats span residues 1-215 (MKGT…RKSF) and 216-429 (PTLP…ETAK). A divalent metal cation is bound by residues glutamate 276, glutamate 278, and aspartate 307.

It belongs to the FAH family. In terms of assembly, monomer. It depends on Mg(2+) as a cofactor.

The catalysed reaction is (2E,4Z)-5-hydroxypenta-2,4-diene-1,2,5-tricarboxylate = (3E,5R)-5-carboxy-2-oxohept-3-enedioate. The enzyme catalyses (3E,5R)-5-carboxy-2-oxohept-3-enedioate + H(+) = (4Z)-2-oxohept-4-enedioate + CO2. Its pathway is aromatic compound metabolism; 4-hydroxyphenylacetate degradation; pyruvate and succinate semialdehyde from 4-hydroxyphenylacetate: step 4/7. It functions in the pathway aromatic compound metabolism; 4-hydroxyphenylacetate degradation; pyruvate and succinate semialdehyde from 4-hydroxyphenylacetate: step 5/7. Functionally, decarboxylates OPET (5-oxo-pent-3-ene-1,2,5-tricarboxylic acid) into HHDD (2-hydroxy-hept-2,4-diene-1,7-dioate) and isomerizes it to OHED (2-oxo-hept-3-ene-1,7-dioate). The sequence is that of 4-hydroxyphenylacetate degradation bifunctional isomerase/decarboxylase (hpaG) from Escherichia coli.